A 105-amino-acid polypeptide reads, in one-letter code: Putative zinc finger protein 861 (105 aa).

The segment at 75 to 97 (YTCKPCGNAFRFHHSFHIHERPH) adopts a C2H2-type zinc-finger fold.

This is Putative zinc finger protein 861 (ZNF861P) from Homo sapiens (Human).